The following is a 180-amino-acid chain: Molybdopterin synthase catalytic subunit (180 aa).

Residues 1-10 (MSSTTPTTEP) are compositionally biased toward polar residues. Positions 1–31 (MSSTTPTTEPDQLPPHLDPQTYPRTTTNPTL) are disordered. Residues 21–31 (TYPRTTTNPTL) are compositionally biased toward low complexity. Substrate is bound by residues 131–132 (HR), K147, and 154–156 (KKE).

It belongs to the MoaE family. MOCS2B subfamily. As to quaternary structure, heterotetramer; composed of 2 small (MOCS2A) and 2 large (MOCS2B) subunits.

The protein resides in the cytoplasm. The catalysed reaction is 2 [molybdopterin-synthase sulfur-carrier protein]-C-terminal-Gly-aminoethanethioate + cyclic pyranopterin phosphate + H2O = molybdopterin + 2 [molybdopterin-synthase sulfur-carrier protein]-C-terminal Gly-Gly + 2 H(+). The protein operates within cofactor biosynthesis; molybdopterin biosynthesis. Its function is as follows. Catalytic subunit of the molybdopterin synthase complex, a complex that catalyzes the conversion of precursor Z into molybdopterin. Acts by mediating the incorporation of 2 sulfur atoms from thiocarboxylated MOCS2A into precursor Z to generate a dithiolene group. This Aspergillus niger (strain ATCC MYA-4892 / CBS 513.88 / FGSC A1513) protein is Molybdopterin synthase catalytic subunit.